Consider the following 792-residue polypeptide: MRFTLSWLLEHLETNASLEEITDKLTHIGLEVKDVVDNTKLAGFIVAKVLEVTPHPNVDKLKLCKVDNGSKILQIVCGANNVREGLKTVLASLGSTLPESNFTIKPTKIRGVLSEGILCSASELMLAQEKSKGIIELSDDYKVGNKFFNCDPVIDINVTTNRGDCLSVHGIARDLAATGIGTLNSLIYSSAIPAHDTGIQDRSKSGMTRSSSINVKVIDGESFISGVYISNVRNKESPRWLKDRLESVGMRSISAIVDITNYIMMSFGRPMHAYDAKKIEGKLIVRKANNGEKFTGLNGKEYLLNNDISVISDNNNIHAIAGIIGGKCSKCTLETTDVFLESAWFNPISVTKSSRQLNISTDSSYRFARSVDPGFILDGLHFAAQMIVDLCGGKASNVVFAGSLDEADTKVSFDYQDVNKFGSVSVLPDEMFDILTKLGFSTDKKTENNWNVKVPSWRSDVTIPADLVEEVVRIYGYDKIKEEPLIDNVEVEINTHDNLRVLMISRGFHEVFTWSFMSESIAEKFGYSNKLFIIDNPFNNNFNIMRPSIVPNLLQVTADNIVHGMSDLAIFEIGPVYDSLDQPKYSLSGIRTGNNLPRNHYNTDRKIDVFDAKADLIAALELFNVSYGNLTIERAEKEYYHPGKSGTLSFKNKATGYFGELHPNILDLFDIKQKVVGFEMILENMGNLPVSREKFIDYKHQSVKRDFAFIVNRDVEVGKIINMVKKSSELITEVFVFDVYHGNNMEPNKMSIALSVTFCSPTHTLIEEEIQKESSAIVNLVHKNTGGILRYT.

The tRNA-binding domain maps to 38–148 (NTKLAGFIVA…DDYKVGNKFF (111 aa)). The region spanning 406-482 (EADTKVSFDY…RIYGYDKIKE (77 aa)) is the B5 domain. Residues Asp-460, Asp-466, Glu-469, and Glu-470 each coordinate Mg(2+). Residues 698-790 (YKHQSVKRDF…VHKNTGGILR (93 aa)) form the FDX-ACB domain.

It belongs to the phenylalanyl-tRNA synthetase beta subunit family. Type 1 subfamily. As to quaternary structure, tetramer of two alpha and two beta subunits. It depends on Mg(2+) as a cofactor.

It is found in the cytoplasm. It carries out the reaction tRNA(Phe) + L-phenylalanine + ATP = L-phenylalanyl-tRNA(Phe) + AMP + diphosphate + H(+). This chain is Phenylalanine--tRNA ligase beta subunit, found in Wolbachia sp. subsp. Brugia malayi (strain TRS).